Here is a 703-residue protein sequence, read N- to C-terminus: Polyribonucleotide nucleotidyltransferase (703 aa).

Mg(2+)-binding residues include D488 and D494. In terms of domain architecture, KH spans 555–614 (PRLYVMKINPEKIRDVIGKGGAVIRALTEETGTQINIEEDGTITIASNDSAKADEAKRRI). The region spanning 624–692 (GKVYEGAITK…EKGRVKLSMK (69 aa)) is the S1 motif domain.

Belongs to the polyribonucleotide nucleotidyltransferase family. It depends on Mg(2+) as a cofactor.

It is found in the cytoplasm. The catalysed reaction is RNA(n+1) + phosphate = RNA(n) + a ribonucleoside 5'-diphosphate. Functionally, involved in mRNA degradation. Catalyzes the phosphorolysis of single-stranded polyribonucleotides processively in the 3'- to 5'-direction. The polypeptide is Polyribonucleotide nucleotidyltransferase (Polaromonas naphthalenivorans (strain CJ2)).